The sequence spans 476 residues: RNA-binding protein 45 (476 aa).

Residues 1–20 (MDEAGSSASGGGFRPGVDSL) are disordered. RRM domains are found at residues 26-106 (SRIF…IAQS) and 121-195 (TRIF…PKNK). Lys34 participates in a covalent cross-link: Glycyl lysine isopeptide (Lys-Gly) (interchain with G-Cter in SUMO2). A phosphoserine mark is found at Ser199 and Ser464. The RRM 3 domain maps to 392-464 (ERLFIVFNPH…VRLKVMLADS (73 aa)).

It localises to the cytoplasm. It is found in the nucleus. Functionally, RNA-binding protein with binding specificity for poly(C). May play an important role in neural development. The polypeptide is RNA-binding protein 45 (RBM45) (Homo sapiens (Human)).